The following is a 591-amino-acid chain: Aspartate--tRNA(Asp/Asn) ligase (591 aa).

Glu-176 serves as a coordination point for L-aspartate. The segment at Gln-200–Lys-203 is aspartate. Arg-222 provides a ligand contact to L-aspartate. ATP is bound by residues Arg-222–Glu-224 and Gln-231. His-450 is a binding site for L-aspartate. An ATP-binding site is contributed by Glu-484. Arg-491 is a binding site for L-aspartate. Gly-536–Arg-539 is a binding site for ATP.

This sequence belongs to the class-II aminoacyl-tRNA synthetase family. Type 1 subfamily. In terms of assembly, homodimer.

The protein resides in the cytoplasm. It catalyses the reaction tRNA(Asx) + L-aspartate + ATP = L-aspartyl-tRNA(Asx) + AMP + diphosphate. In terms of biological role, aspartyl-tRNA synthetase with relaxed tRNA specificity since it is able to aspartylate not only its cognate tRNA(Asp) but also tRNA(Asn). Reaction proceeds in two steps: L-aspartate is first activated by ATP to form Asp-AMP and then transferred to the acceptor end of tRNA(Asp/Asn). The chain is Aspartate--tRNA(Asp/Asn) ligase from Bacillus mycoides (strain KBAB4) (Bacillus weihenstephanensis).